Consider the following 72-residue polypeptide: DNA gyrase inhibitor YacG (72 aa).

Positions 14, 17, 33, and 37 each coordinate Zn(2+).

Belongs to the DNA gyrase inhibitor YacG family. As to quaternary structure, interacts with GyrB. It depends on Zn(2+) as a cofactor.

In terms of biological role, inhibits all the catalytic activities of DNA gyrase by preventing its interaction with DNA. Acts by binding directly to the C-terminal domain of GyrB, which probably disrupts DNA binding by the gyrase. In Mannheimia succiniciproducens (strain KCTC 0769BP / MBEL55E), this protein is DNA gyrase inhibitor YacG.